The primary structure comprises 290 residues: MPFDFRRFDIYRKVPKDLTQPTYTGAIISICCCLFITFLFLSELTGFIANEIVNELYVDDPDKDSGGKIDVTLNVTLPNLPCEVVGLDIQDEMGRHEVGHIDNSMKIPINNAYGCRFEGLFSINKVPGNFHVSTHSAIAQPANPDMRHIIHKLSFGNTLQVDNIHGAFNALGGADKLASKALESHDYVLKIVPTVYEDLNGKQQFSYQYTVANKAYVAYSHTGRVVPAIWFRYDLSPITVKYTERRQPMYRFITTVCAIIGGTFTVAGILDSFIFTASEAWKKIQLGKMQ.

The Cytoplasmic segment spans residues 1–26; it reads MPFDFRRFDIYRKVPKDLTQPTYTGA. A helical transmembrane segment spans residues 27 to 47; that stretch reads IISICCCLFITFLFLSELTGF. The Lumenal portion of the chain corresponds to 48 to 254; sequence IANEIVNELY…RRQPMYRFIT (207 aa). N-linked (GlcNAc...) asparagine glycosylation is present at N74. A helical membrane pass occupies residues 255-275; it reads TVCAIIGGTFTVAGILDSFIF. The Cytoplasmic portion of the chain corresponds to 276–290; that stretch reads TASEAWKKIQLGKMQ.

The protein belongs to the ERGIC family.

Its subcellular location is the endoplasmic reticulum membrane. The protein localises to the endoplasmic reticulum-Golgi intermediate compartment membrane. It is found in the golgi apparatus membrane. Functionally, possible role in transport between endoplasmic reticulum and Golgi. The protein is Endoplasmic reticulum-Golgi intermediate compartment protein 1 (ergic1) of Xenopus laevis (African clawed frog).